Consider the following 997-residue polypeptide: Disease resistance protein RML1A (997 aa).

One can recognise a TIR domain in the interval 12 to 176; sequence WRYRVFTSFH…KIARDVSEKL (165 aa). E87 is an active-site residue. The region spanning 191-447 is the NB-ARC domain; sequence EAHLRKIQSL…HIAIFFNYED (257 aa). LRR repeat units lie at residues 194-218, 534-557, 600-623, 624-647, 649-670, 671-693, 694-714, 715-737, 758-781, and 783-808; these read LRKI…GPAG, TSGI…RFLS, AENL…TQLL, TKLK…SNAT, LEML…IKNL, HKLD…NINL, ASLE…PAFS, TKIK…ITHC, PSSL…CIKD, and QRLD…SLRL.

It carries out the reaction NAD(+) + H2O = ADP-D-ribose + nicotinamide + H(+). Its function is as follows. TIR-NB-LRR receptor-like protein that confers resistance to the pathogen Leptosphaeria maculans (blackleg disease). The polypeptide is Disease resistance protein RML1A (Arabidopsis thaliana (Mouse-ear cress)).